Consider the following 725-residue polypeptide: MSTSNDPSNNASAGKCPFHAETPKQSAGSGTANRDWWPNQLRVDLLNQHSNRSNPLGENFNYREEFKKLDYSALKADLRALLTDSQEWWPADWGSYIGLFIRMAWHGAGTYRTVDGRGGAGRGQQRFAPLNSWPDNVSLDKARRLLWPVKQKYGQKISWADLYMLAGNVALENAGFRTFGFGAGREDVWEPDLDVDWGDEKEWLAHRHPESLAKQAIGATEMGLIYVNPEGPNASGEPLSAAAAIRATFGNMAMDDEEIVALIAGGHTLGKTHGAAETSHVGAEPEAAPLEAQGLGWHSSYGSGAGADAITSGLEVVWTQTPTQWSNYFFENLFKYEWVQTRSPAGAIQFEAKDAPEIIPDPFNPEKKRKPTMLVTDLTLRFDPEFEKISRRFLNDPQAFNEAFARAWFKLTHRDMGPKSRYLGPEVPKEDLIWQDPLPAATHQPSAEDIASLKTAIAGAGLSVSELVSVAWASASTFRGGDKRGGANGARLALAPQKDWPVNAIASRVLPTLQAIQRASGKASLADIIVLAGVVGVEQAAAAAGVSVNVPFTPGRVDALPEQTDVESFDLLQPLADGFRNYRRIEGGVSTETLLIDKAQQLTLTAPEMTVLVGGLRVLGANYDGSKHGVFTDRVGVLSNDFFVNLLDMATVWKAADDNAELFTGSDRKTGEAKYSATRVDLVFGSNSVLRALAEVYACADGQQKLVHDFVAAWTKVMNLDRFDL.

Composition is skewed to polar residues over residues 1–12 (MSTSNDPSNNAS) and 23–32 (PKQSAGSGTA). The first 20 residues, 1–20 (MSTSNDPSNNASAGKCPFHA), serve as a signal peptide directing secretion. Residues 1-35 (MSTSNDPSNNASAGKCPFHAETPKQSAGSGTANRD) are disordered. Residues 105–226 (WHGAGTYRTV…IGATEMGLIY (122 aa)) constitute a cross-link (tryptophyl-tyrosyl-methioninium (Trp-Tyr) (with M-252)). His-106 functions as the Proton acceptor in the catalytic mechanism. Residues 226–252 (YVNPEGPNASGEPLSAAAAIRATFGNM) constitute a cross-link (tryptophyl-tyrosyl-methioninium (Tyr-Met) (with W-105)). His-267 provides a ligand contact to heme b.

This sequence belongs to the peroxidase family. Peroxidase/catalase subfamily. As to quaternary structure, homodimer or homotetramer. Heme b serves as cofactor. In terms of processing, formation of the three residue Trp-Tyr-Met cross-link is important for the catalase, but not the peroxidase activity of the enzyme.

It catalyses the reaction H2O2 + AH2 = A + 2 H2O. It carries out the reaction 2 H2O2 = O2 + 2 H2O. Bifunctional enzyme with both catalase and broad-spectrum peroxidase activity. The sequence is that of Catalase-peroxidase from Klebsiella pneumoniae subsp. pneumoniae (strain ATCC 700721 / MGH 78578).